The primary structure comprises 50 residues: uncharacterized protein (50 aa).

This is an uncharacterized protein from Bacillus subtilis (strain 168).